The chain runs to 367 residues: Heparan sulfate glucosamine 3-O-sulfotransferase 2 (367 aa).

Topologically, residues 1-19 are cytoplasmic; sequence MAYRVLGRAGPPQPRRARR. The chain crosses the membrane as a helical; Signal-anchor for type II membrane protein span at residues 20–39; the sequence is LLFAFTLSLSCTYLCYSFLC. At 40-367 the chain is on the lumenal side; the sequence is CCDGLGQSRL…ETVGQDFRWE (328 aa). The segment at 66-115 is disordered; the sequence is LLAKSRPCDPPGPTPSEPSAPSAPAAAAPAPRLSGSNHSGSPKPGTKRLP. A compositionally biased stretch (pro residues) spans 73–83; the sequence is CDPPGPTPSEP. The segment covering 84-96 has biased composition (low complexity); that stretch reads SAPSAPAAAAPAP. N-linked (GlcNAc...) asparagine glycosylation occurs at Asn102. A 3'-phosphoadenylyl sulfate-binding site is contributed by 124–128; the sequence is KGGTR. Substrate is bound by residues 146–152 and 177–180; these read EPHFFDR and KTPS. Asn193 is a glycosylation site (N-linked (GlcNAc...) asparagine). Positions 205 and 213 each coordinate 3'-phosphoadenylyl sulfate. Residue Asn235 is glycosylated (N-linked (GlcNAc...) asparagine). 245–246 provides a ligand contact to substrate; the sequence is WN. Asn306 carries an N-linked (GlcNAc...) asparagine glycan. A disulfide bond links Cys313 and Cys325. Residue 330–334 participates in 3'-phosphoadenylyl sulfate binding; the sequence is KGRTH.

It belongs to the sulfotransferase 1 family.

The protein localises to the golgi apparatus membrane. The enzyme catalyses alpha-D-glucosaminyl-[heparan sulfate](n) + 3'-phosphoadenylyl sulfate = 3-sulfo-alpha-D-glucosaminyl-[heparan sulfate](n) + adenosine 3',5'-bisphosphate + H(+). Its function is as follows. Sulfotransferase that utilizes 3'-phospho-5'-adenylyl sulfate (PAPS) to catalyze the transfer of a sulfo group to an N-unsubstituted glucosamine linked to a 2-O-sulfo iduronic acid unit on heparan sulfate. Catalyzes the O-sulfation of glucosamine in GlcA2S-GlcNS. Unlike HS3ST1/3-OST-1, does not convert non-anticoagulant heparan sulfate to anticoagulant heparan sulfate. The sequence is that of Heparan sulfate glucosamine 3-O-sulfotransferase 2 (Hs3st2) from Mus musculus (Mouse).